The chain runs to 462 residues: tRNA wybutosine-synthesizing protein 2 (462 aa).

S-adenosyl-L-methionine contacts are provided by residues S257, K264, and 305-306 (EL).

It belongs to the class I-like SAM-binding methyltransferase superfamily. TRM5/TYW2 family.

The protein localises to the cytoplasm. The catalysed reaction is 4-demethylwyosine(37) in tRNA(Phe) + S-adenosyl-L-methionine = 4-demethyl-7-[(3S)-3-amino-3-carboxypropyl]wyosine(37) in tRNA(Phe) + S-methyl-5'-thioadenosine + H(+). It participates in tRNA modification; wybutosine-tRNA(Phe) biosynthesis. Its function is as follows. S-adenosyl-L-methionine-dependent transferase that acts as a component of the wybutosine biosynthesis pathway. Wybutosine is a hyper modified guanosine with a tricyclic base found at the 3'-position adjacent to the anticodon of eukaryotic phenylalanine tRNA. Catalyzes the transfer of the alpha-amino-alpha-carboxypropyl (acp) group from S-adenosyl-L-methionine to the C-7 position of 4-demethylwyosine (imG-14) to produce wybutosine-86. This is tRNA wybutosine-synthesizing protein 2 (TRM12) from Saccharomyces cerevisiae (strain ATCC 204508 / S288c) (Baker's yeast).